A 409-amino-acid chain; its full sequence is Single Ig IL-1-related receptor (409 aa).

Residues 1-117 (MAGVCDMAPN…TLWRAGPAGH (117 aa)) are Extracellular-facing. The region spanning 9–108 (PNFLSPSEDQ…VWNVSSHSFT (100 aa)) is the Ig-like C2-type domain. Residues Asn-31, Asn-58, Asn-73, Asn-85, and Asn-101 are each glycosylated (N-linked (GlcNAc...) asparagine). Cys-32 and Cys-97 form a disulfide bridge. The helical; Signal-anchor for type III membrane protein transmembrane segment at 118 to 138 (VAAVLASLLVLVVLLLVALLY) threads the bilayer. Topologically, residues 139-409 (VKCRLNMLLW…FYCLVSEDDV (271 aa)) are cytoplasmic. Residues 162–306 (KLYDAYVSYS…DFWKELQLAL (145 aa)) enclose the TIR domain. Residue Ser-382 is modified to Phosphoserine.

It belongs to the interleukin-1 receptor family. As to quaternary structure, interacts with IL1R1, IRAK1, TLR4, TLR5, TLR9 and TRAF6. Upon IL-1 stimulation found in a complex at least composed of IL1R1, SIGIRR, MYD88, IRAK1 and TRAF6. Upon stimulation with LPC found in a complex at least composed of TLR4, SIG1IR, MYD88, IRAK1 and TRAF6. Interacts with PALM3. Expressed at high levels in kidney, and at moderate levels in colon, small intestine, lung, spleen and liver. Not expressed in brain and muscle. Expressed at high levels in epithelial cells, at moderate levels in splenocytes, and at low or undetectable levels in fibroblasts or endothelial cells. Expressed in mucosal and dendritic cells.

It is found in the membrane. Its function is as follows. Acts as a negative regulator of the Toll-like and IL-1R receptor signaling pathways. Attenuates the recruitment of receptor-proximal signaling components to the TLR4 receptor, probably through an TIR-TIR domain interaction with TLR4. Through its extracellular domain interferes with the heterodimerization of Il1R1 and IL1RAP. The chain is Single Ig IL-1-related receptor (Sigirr) from Mus musculus (Mouse).